Reading from the N-terminus, the 948-residue chain is Putative helicase 009L (948 aa).

The Helicase ATP-binding domain maps to 64–243 (LSEDTPYREL…ADVLNLILPQ (180 aa)). 77 to 84 (HAPGTGKT) lines the ATP pocket. The DEAH box motif lies at 187–190 (DEVH). In terms of domain architecture, Helicase C-terminal spans 371–554 (VKYDYLVRVA…AVERILMTSA (184 aa)).

In Frog virus 3 (isolate Goorha) (FV-3), this protein is Putative helicase 009L.